Reading from the N-terminus, the 248-residue chain is 3-oxoacyl-[acyl-carrier-protein] reductase FabG (248 aa).

NADP(+) contacts are provided by residues 14-17, 65-66, and Asn-92; these read GGSR and DV. A substrate-binding site is contributed by Ser-144. The active-site Proton acceptor is Tyr-157. Residues 157-161 and Ile-190 contribute to the NADP(+) site; that span reads YAAAK.

This sequence belongs to the short-chain dehydrogenases/reductases (SDR) family. In terms of assembly, homotetramer.

It catalyses the reaction a (3R)-hydroxyacyl-[ACP] + NADP(+) = a 3-oxoacyl-[ACP] + NADPH + H(+). It functions in the pathway lipid metabolism; fatty acid biosynthesis. Functionally, catalyzes the NADPH-dependent reduction of beta-ketoacyl-ACP substrates to beta-hydroxyacyl-ACP products, the first reductive step in the elongation cycle of fatty acid biosynthesis. This Chlamydia muridarum (strain MoPn / Nigg) protein is 3-oxoacyl-[acyl-carrier-protein] reductase FabG (fabG).